We begin with the raw amino-acid sequence, 88 residues long: Large ribosomal subunit protein bL31B (88 aa).

This sequence belongs to the bacterial ribosomal protein bL31 family. Type B subfamily. Part of the 50S ribosomal subunit.

This chain is Large ribosomal subunit protein bL31B, found in Bordetella pertussis (strain Tohama I / ATCC BAA-589 / NCTC 13251).